The chain runs to 295 residues: Protoheme IX farnesyltransferase (295 aa).

9 helical membrane-spanning segments follow: residues 24-43, 47-69, 94-114, 117-137, 144-164, 171-191, 216-236, 241-261, and 272-292; these read IMYL…PGSI, LALI…NMWY, SALE…AIAV, ISAI…TIWL, NIVI…AVVT, GFVL…ALSL, KYIL…ALFL, FYLG…VSIM, and MFSY…LCSI.

The protein belongs to the UbiA prenyltransferase family. Protoheme IX farnesyltransferase subfamily.

It localises to the cell membrane. It catalyses the reaction heme b + (2E,6E)-farnesyl diphosphate + H2O = Fe(II)-heme o + diphosphate. The protein operates within porphyrin-containing compound metabolism; heme O biosynthesis; heme O from protoheme: step 1/1. Functionally, converts heme B (protoheme IX) to heme O by substitution of the vinyl group on carbon 2 of heme B porphyrin ring with a hydroxyethyl farnesyl side group. The protein is Protoheme IX farnesyltransferase of Wolbachia sp. subsp. Brugia malayi (strain TRS).